The following is a 208-amino-acid chain: Uracil phosphoribosyltransferase (208 aa).

Residues arginine 78, arginine 103, and 130 to 138 (DPMLATGGS) each bind 5-phospho-alpha-D-ribose 1-diphosphate. Uracil contacts are provided by residues isoleucine 193 and 198–200 (GDA). 5-phospho-alpha-D-ribose 1-diphosphate is bound at residue aspartate 199.

This sequence belongs to the UPRTase family. Mg(2+) is required as a cofactor.

It carries out the reaction UMP + diphosphate = 5-phospho-alpha-D-ribose 1-diphosphate + uracil. Its pathway is pyrimidine metabolism; UMP biosynthesis via salvage pathway; UMP from uracil: step 1/1. Allosterically activated by GTP. In terms of biological role, catalyzes the conversion of uracil and 5-phospho-alpha-D-ribose 1-diphosphate (PRPP) to UMP and diphosphate. This Neisseria gonorrhoeae (strain ATCC 700825 / FA 1090) protein is Uracil phosphoribosyltransferase.